The sequence spans 220 residues: Endonuclease NucS (220 aa).

It belongs to the NucS endonuclease family.

The protein resides in the cytoplasm. In terms of biological role, cleaves both 3' and 5' ssDNA extremities of branched DNA structures. The polypeptide is Endonuclease NucS (Parafrankia sp. (strain EAN1pec)).